A 122-amino-acid chain; its full sequence is Large ribosomal subunit protein uL14 (122 aa).

The protein belongs to the universal ribosomal protein uL14 family. In terms of assembly, part of the 50S ribosomal subunit. Forms a cluster with proteins L3 and L19. In the 70S ribosome, L14 and L19 interact and together make contacts with the 16S rRNA in bridges B5 and B8.

Its function is as follows. Binds to 23S rRNA. Forms part of two intersubunit bridges in the 70S ribosome. The protein is Large ribosomal subunit protein uL14 of Ectopseudomonas mendocina (strain ymp) (Pseudomonas mendocina).